Reading from the N-terminus, the 529-residue chain is Bifunctional purine biosynthesis protein PurH (529 aa).

The MGS-like domain maps to 1–148 (MQQRRPVRRA…KNHKDVAIVV (148 aa)).

The protein belongs to the PurH family.

It carries out the reaction (6R)-10-formyltetrahydrofolate + 5-amino-1-(5-phospho-beta-D-ribosyl)imidazole-4-carboxamide = 5-formamido-1-(5-phospho-D-ribosyl)imidazole-4-carboxamide + (6S)-5,6,7,8-tetrahydrofolate. The catalysed reaction is IMP + H2O = 5-formamido-1-(5-phospho-D-ribosyl)imidazole-4-carboxamide. It participates in purine metabolism; IMP biosynthesis via de novo pathway; 5-formamido-1-(5-phospho-D-ribosyl)imidazole-4-carboxamide from 5-amino-1-(5-phospho-D-ribosyl)imidazole-4-carboxamide (10-formyl THF route): step 1/1. The protein operates within purine metabolism; IMP biosynthesis via de novo pathway; IMP from 5-formamido-1-(5-phospho-D-ribosyl)imidazole-4-carboxamide: step 1/1. The protein is Bifunctional purine biosynthesis protein PurH of Klebsiella pneumoniae (strain 342).